We begin with the raw amino-acid sequence, 318 residues long: Transcriptional regulator NovG (318 aa).

A compositionally biased stretch (polar residues) spans Val-146–Gly-156. The interval Val-146–Gly-176 is disordered. The segment covering Thr-162–Gly-176 has biased composition (basic and acidic residues).

It belongs to the ParB family.

Transcription regulator that specifically activates expression of genes involved in the novobiocin biosynthesis pathway. Binds 5'-GTTCRACTG(N)(11)CRGTYGAAC-3' DNA sequence. In Streptomyces niveus (Streptomyces spheroides), this protein is Transcriptional regulator NovG (novG).